A 90-amino-acid chain; its full sequence is Small ribosomal subunit protein uS15c (90 aa).

The protein belongs to the universal ribosomal protein uS15 family. Part of the 30S ribosomal subunit.

The protein localises to the plastid. It is found in the chloroplast. The protein is Small ribosomal subunit protein uS15c (rps15) of Manihot esculenta (Cassava).